Consider the following 630-residue polypeptide: MTDTNHSSMRQHSLQSLAIAAIGVVFGDIGTSPLYSLKEAFSPAHGIPLTPSAILGVISLLFWAIILVVGIKYVLFVMRADNNGEGGVLALMALSLRPLNPKSRITGLMMALGIFGACMFYGDAVITPAISVMSAVEGLEVATPQLSHLVLPITIVILIALFWIQRHGTATVGKLFGPIMVLWFVTIAALGIYHIARAPMIVSAINPYYAFSFMSEHVLLAYVVLGSVVLVLTGAEALYADMGHFGAKPIRLAAYVLVMPSLVLNYFGQGALLLLDPKAIENPFFLLAPQWAALPLVVLSTVATVIASQAVISGAYSLTSQAIQLGYVPRMKILHTSELAIGQIYVPVVNWLLLFVILCIVIGFKSSDNLAAAYGIAVTATMVITTILAAVVMVKVWNWNKLLVAMIIGVFLVIDLGFFGANLLKVEQGGWLPLGIGALLFFLLMTWYKGRHIVKERTAADGIPLAPFLQGLLAHPPHRVSGTAIYLTGNDTLVPVSLLHNLKHNKVLHERTIFMTFVTRDIPYVKDHERVTVHDAGEGLYIVKAEYGFNETPDVKAVLEEVARQRGMTFELMDTSFFLARETVVPTHLPGMSIWRERVFAWMHQNAAKPTDFFAIPANRVVELGTKIEI.

12 helical membrane passes run 17-37 (LAIA…LYSL), 51-71 (PSAI…VVGI), 105-125 (ITGL…GDAV), 144-164 (PQLS…LFWI), 175-195 (LFGP…IYHI), 218-238 (VLLA…AEAL), 255-275 (YVLV…LLLL), 283-303 (PFFL…STVA), 344-364 (IYVP…VIGF), 374-394 (YGIA…VVMV), 402-422 (LLVA…FGAN), and 428-448 (QGGW…MTWY).

The protein belongs to the HAK/KUP transporter (TC 2.A.72) family.

It localises to the cell inner membrane. It carries out the reaction K(+)(in) + H(+)(in) = K(+)(out) + H(+)(out). Functionally, transport of potassium into the cell. Likely operates as a K(+):H(+) symporter. The sequence is that of Probable potassium transport system protein Kup from Burkholderia pseudomallei (strain 1710b).